The primary structure comprises 766 residues: Sucrose synthase (766 aa).

The segment at 220–698 is GT-B glycosyltransferase; the sequence is MVFNVVILSV…GLLRIKERYT (479 aa).

This sequence belongs to the glycosyltransferase 1 family. Plant sucrose synthase subfamily. In terms of tissue distribution, expressed most predominantly in tap root.

The enzyme catalyses an NDP-alpha-D-glucose + D-fructose = a ribonucleoside 5'-diphosphate + sucrose + H(+). Sucrose-cleaving enzyme that provides UDP-glucose and fructose for various metabolic pathways. In Beta vulgaris (Sugar beet), this protein is Sucrose synthase (SS1).